Reading from the N-terminus, the 209-residue chain is Guanylate kinase (209 aa).

The Guanylate kinase-like domain maps to 5–184 (GLLIVFSGPS…AAERVKRVIE (180 aa)). 12–19 (GPSGVGKG) lines the ATP pocket.

The protein belongs to the guanylate kinase family.

Its subcellular location is the cytoplasm. It catalyses the reaction GMP + ATP = GDP + ADP. Essential for recycling GMP and indirectly, cGMP. This chain is Guanylate kinase, found in Streptococcus agalactiae serotype Ia (strain ATCC 27591 / A909 / CDC SS700).